A 422-amino-acid chain; its full sequence is Serine/threonine-protein kinase H1 homolog (422 aa).

A disordered region spans residues 35–80 (FIKYDGGGEKTGSPSPQGQSQAVAKVSQSPPPANDQPEPADSHRKK). The span at 46-62 (GSPSPQGQSQAVAKVSQ) shows a compositional bias: polar residues. One can recognise a Protein kinase domain in the interval 96–353 (YDIKALIGRG…AGQALKHPWI (258 aa)). ATP is bound by residues 102–110 (IGRGSFSRV) and lysine 125. Aspartate 216 acts as the Proton acceptor in catalysis. Residues 376 to 422 (RASSRCHSTKSSQSTRSSRSTKSSKARRLREKELRELNRRYQQQCNG) form a disordered region. The span at 384 to 396 (TKSSQSTRSSRST) shows a compositional bias: low complexity. The span at 405-414 (REKELRELNR) shows a compositional bias: basic and acidic residues.

This sequence belongs to the protein kinase superfamily. CAMK Ser/Thr protein kinase family.

The catalysed reaction is L-seryl-[protein] + ATP = O-phospho-L-seryl-[protein] + ADP + H(+). It catalyses the reaction L-threonyl-[protein] + ATP = O-phospho-L-threonyl-[protein] + ADP + H(+). This is Serine/threonine-protein kinase H1 homolog (pskh1) from Danio rerio (Zebrafish).